Reading from the N-terminus, the 683-residue chain is ATP-dependent zinc metalloprotease FtsH (683 aa).

Residues 1–43 (MEDKNIKDDEILDDQNDNQEDVQNQDEEKEIKPKKPKKKVYIS) are disordered. Residues 1–70 (MEDKNIKDDE…KNNNISFRVK (70 aa)) are Cytoplasmic-facing. A compositionally biased stretch (acidic residues) spans 10 to 28 (EILDDQNDNQEDVQNQDEE). Residues 71-91 (PPIFFFLILILMSTLFYFYGN) form a helical membrane-spanning segment. The Periplasmic segment spans residues 92 to 174 (KTALFQEKRE…IVVLGTPVSS (83 aa)). Residues 175–195 (IITRAIFSFAPLFMLLFFFYF) form a helical membrane-spanning segment. At 196–683 (INKKMMGSSG…LDDEQLEKYY (488 aa)) the chain is on the cytoplasmic side. 270-277 (GEPGTGKT) is a binding site for ATP. A Zn(2+)-binding site is contributed by His-494. Glu-495 is an active-site residue. Positions 498 and 569 each coordinate Zn(2+).

This sequence in the central section; belongs to the AAA ATPase family. The protein in the C-terminal section; belongs to the peptidase M41 family. As to quaternary structure, homohexamer. It depends on Zn(2+) as a cofactor.

Its subcellular location is the cell inner membrane. Its function is as follows. Acts as a processive, ATP-dependent zinc metallopeptidase for both cytoplasmic and membrane proteins. Plays a role in the quality control of integral membrane proteins. The sequence is that of ATP-dependent zinc metalloprotease FtsH from Streptobacillus moniliformis (strain ATCC 14647 / DSM 12112 / NCTC 10651 / 9901).